The sequence spans 37 residues: Large ribosomal subunit protein bL36c (37 aa).

The protein belongs to the bacterial ribosomal protein bL36 family.

Its subcellular location is the plastid. The protein resides in the chloroplast. This Nephroselmis olivacea (Green alga) protein is Large ribosomal subunit protein bL36c (rpl36).